Reading from the N-terminus, the 103-residue chain is MSGRGKGGKGLGKGGAKRHRKILRDNIQGITKPAIRRLARRGGVKRISAMIYEETRGVLKTFLEGVIRDAVTYTEHAKRKTVTSLDVVYALKRQGRTLYGFGG.

Gly residues predominate over residues 1 to 14 (MSGRGKGGKGLGKG). The interval 1 to 20 (MSGRGKGGKGLGKGGAKRHR) is disordered. Position 6 is an N6-acetyl-N6-methyllysine; alternate (K6). Residues K6, K9, and K13 each carry the N6-methyllysine; alternate modification. Residue K13 is modified to N6-acetyl-N6-methyllysine; alternate. Residues 17-21 (KRHRK) mediate DNA binding. K92 bears the N6-glutaryllysine mark.

This sequence belongs to the histone H4 family. The nucleosome is a histone octamer containing two molecules each of H2A, H2B, H3 and H4 assembled in one H3-H4 heterotetramer and two H2A-H2B heterodimers. The octamer wraps approximately 147 bp of DNA. Post-translationally, glutarylation at Lys-92 (H4K91glu) destabilizes nucleosomes by promoting dissociation of the H2A-H2B dimers from nucleosomes.

The protein localises to the nucleus. The protein resides in the chromosome. Core component of nucleosome. Nucleosomes wrap and compact DNA into chromatin, limiting DNA accessibility to the cellular machineries which require DNA as a template. Histones thereby play a central role in transcription regulation, DNA repair, DNA replication and chromosomal stability. DNA accessibility is regulated via a complex set of post-translational modifications of histones, also called histone code, and nucleosome remodeling. This is Histone H4.1 (hhfA) from Emericella nidulans (strain FGSC A4 / ATCC 38163 / CBS 112.46 / NRRL 194 / M139) (Aspergillus nidulans).